Consider the following 168-residue polypeptide: MNVMQKPFIAKATINIGVGEGGEKLTRAEKLIETLVDQKPVRTYSKVTNPEFGIRKKQPIACKVTLRGEKADKIISMVLSGLENRIKASQFDKEGNVSFGIREHIDIPGVKYDPDIGIFGMDVSVTFQKPGHRIKERRLRPKKLPQAQRVTKEESMEYMKENFNVTIE.

Belongs to the universal ribosomal protein uL5 family. As to quaternary structure, part of the 50S ribosomal subunit; contacts the 5S rRNA and probably tRNA. Forms a bridge to the 30S subunit in the 70S ribosome.

Its function is as follows. This is one of the proteins that bind and probably mediate the attachment of the 5S RNA into the large ribosomal subunit, where it forms part of the central protuberance. In the 70S ribosome it contacts protein S13 of the 30S subunit (bridge B1b), connecting the 2 subunits; this bridge is implicated in subunit movement. May contact the P site tRNA; the 5S rRNA and some of its associated proteins might help stabilize positioning of ribosome-bound tRNAs. This Methanosphaera stadtmanae (strain ATCC 43021 / DSM 3091 / JCM 11832 / MCB-3) protein is Large ribosomal subunit protein uL5.